The chain runs to 223 residues: Kinetochore protein Spc25 (223 aa).

The stretch at 51–116 (RHQRKVGKLQ…QRKNEIMERI (66 aa)) forms a coiled coil.

The protein belongs to the SPC25 family. Component of the Ndc80 complex, which is composed of Ndc80, Nuf2 and Spc25.

It localises to the nucleus. The protein localises to the chromosome. It is found in the centromere. Its subcellular location is the kinetochore. Acts as a component of the essential kinetochore-associated Ndc80 complex, which is required for chromosome segregation and spindle checkpoint activity during meiosis and mitosis. Required for kinetochore integrity and the organization of stable microtubule binding sites in the outer plate of the kinetochore. Participates in SAC signaling that responds specifically to disruptions in spindle microtubule dynamics. The NDC80 complex synergistically enhances the affinity of the SKA1 complex for microtubules and may allow the NDC80 complex to track depolymerizing microtubules. This Drosophila yakuba (Fruit fly) protein is Kinetochore protein Spc25.